A 215-amino-acid polypeptide reads, in one-letter code: NAD(P)H-quinone oxidoreductase subunit I (215 aa).

2 4Fe-4S ferredoxin-type domains span residues 55 to 84 and 95 to 124; these read GRIHYEFDKCIACEVCVRVCPINLPVVDWV and RNYSIDFGVCIFCGNCVEYCPTNCLSMTEE. Cys-64, Cys-67, Cys-70, Cys-74, Cys-104, Cys-107, Cys-110, and Cys-114 together coordinate [4Fe-4S] cluster. Over residues 169 to 180 the composition is skewed to basic and acidic residues; it reads MDPHGVASDRPR. The disordered stretch occupies residues 169-215; that stretch reads MDPHGVASDRPRAGQLPAQVLETLTPPAKPTAKNDGQSSSEAKEGDA.

The protein belongs to the complex I 23 kDa subunit family. In terms of assembly, NDH-1 is composed of at least 11 different subunits. [4Fe-4S] cluster serves as cofactor.

Its subcellular location is the cellular thylakoid membrane. It carries out the reaction a plastoquinone + NADH + (n+1) H(+)(in) = a plastoquinol + NAD(+) + n H(+)(out). It catalyses the reaction a plastoquinone + NADPH + (n+1) H(+)(in) = a plastoquinol + NADP(+) + n H(+)(out). NDH-1 shuttles electrons from an unknown electron donor, via FMN and iron-sulfur (Fe-S) centers, to quinones in the respiratory and/or the photosynthetic chain. The immediate electron acceptor for the enzyme in this species is believed to be plastoquinone. Couples the redox reaction to proton translocation, and thus conserves the redox energy in a proton gradient. In Synechococcus sp. (strain CC9605), this protein is NAD(P)H-quinone oxidoreductase subunit I.